Reading from the N-terminus, the 166-residue chain is Large ribosomal subunit protein uL10 (166 aa).

It belongs to the universal ribosomal protein uL10 family. As to quaternary structure, part of the ribosomal stalk of the 50S ribosomal subunit. The N-terminus interacts with L11 and the large rRNA to form the base of the stalk. The C-terminus forms an elongated spine to which L12 dimers bind in a sequential fashion forming a multimeric L10(L12)X complex.

Its function is as follows. Forms part of the ribosomal stalk, playing a central role in the interaction of the ribosome with GTP-bound translation factors. In Pseudomonas entomophila (strain L48), this protein is Large ribosomal subunit protein uL10.